Here is a 628-residue protein sequence, read N- to C-terminus: Patulin synthase (628 aa).

The first 20 residues, 1–20 (MRPIPSILGALGAFATLSAA), serve as a signal peptide directing secretion. Asn-48 carries an N-linked (GlcNAc...) asparagine glycan. FAD is bound by residues 60–61 (TA) and 81–82 (EA). An N-linked (GlcNAc...) asparagine glycan is attached at Asn-92. Position 147-150 (147-150 (NYMA)) interacts with FAD. 5 N-linked (GlcNAc...) asparagine glycosylation sites follow: Asn-197, Asn-260, Asn-386, Asn-429, and Asn-486. The active-site Proton acceptor is the His-564. Residues Ala-598 and 609 to 610 (PQ) each bind FAD.

Belongs to the GMC oxidoreductase family. As to quaternary structure, homodimer. Requires FAD as cofactor.

The protein localises to the cytoplasm. It is found in the cell cortex. It localises to the vacuole. The protein resides in the secreted. Its subcellular location is the cell wall. The catalysed reaction is (E)-ascladiol + A = patulin + AH2. It functions in the pathway mycotoxin biosynthesis; patulin biosynthesis. Patulin synthase; part of the gene cluster that mediates the biosynthesis of patulin, an acetate-derived tetraketide mycotoxin produced by several fungal species that shows antimicrobial properties against several bacteria. PatE catalyzes the last step of the pathway which is the conversion of E-ascladiol to patulin. The pathway begins with the synthesis of 6-methylsalicylic acid by the polyketide synthase (PKS) patK via condensation of acetate and malonate units. The 6-methylsalicylic acid decarboxylase patG then catalyzes the decarboxylation of 6-methylsalicylic acid to yield m-cresol (also known as 3-methylphenol). These first reactions occur in the cytosol. The intermediate m-cresol is then transported into the endoplasmic reticulum where the cytochrome P450 monooxygenase patH converts it to m-hydroxybenzyl alcohol, which is further converted to gentisyl alcohol by the cytochrome P450 monooxygenase patI. The oxidoreductases patJ and patO further convert gentisyl alcohol to isoepoxydon in the vacuole. PatN catalyzes then the transformation of isoepoxydon into phyllostine. The cluster protein patF is responsible for the conversion from phyllostine to neopatulin whereas the alcohol dehydrogenase patD converts neopatulin to E-ascladiol. The steps between isoepoxydon and E-ascladiol occur in the cytosol, and E-ascladiol is probably secreted to the extracellular space by one of the cluster-specific transporters patC or patM. Finally, the secreted patulin synthase patE catalyzes the conversion of E-ascladiol to patulin. The chain is Patulin synthase from Aspergillus clavatus (strain ATCC 1007 / CBS 513.65 / DSM 816 / NCTC 3887 / NRRL 1 / QM 1276 / 107).